A 134-amino-acid polypeptide reads, in one-letter code: Small ribosomal subunit protein uS8c (134 aa).

It belongs to the universal ribosomal protein uS8 family. Part of the 30S ribosomal subunit.

Its subcellular location is the plastid. The protein localises to the chloroplast. Its function is as follows. One of the primary rRNA binding proteins, it binds directly to 16S rRNA central domain where it helps coordinate assembly of the platform of the 30S subunit. The polypeptide is Small ribosomal subunit protein uS8c (rps8) (Lactuca sativa (Garden lettuce)).